The primary structure comprises 90 residues: Small ribosomal subunit protein bS16 (90 aa).

This sequence belongs to the bacterial ribosomal protein bS16 family.

The protein is Small ribosomal subunit protein bS16 of Shouchella clausii (strain KSM-K16) (Alkalihalobacillus clausii).